The sequence spans 198 residues: Na(+)-translocating NADH-quinone reductase subunit E (198 aa).

6 helical membrane-spanning segments follow: residues Ser11–Val31, Phe39–Val59, Phe77–Val97, Gly110–Val130, Ile140–Ile160, and Leu176–Val196.

It belongs to the NqrDE/RnfAE family. As to quaternary structure, composed of six subunits; NqrA, NqrB, NqrC, NqrD, NqrE and NqrF.

The protein localises to the cell inner membrane. It carries out the reaction a ubiquinone + n Na(+)(in) + NADH + H(+) = a ubiquinol + n Na(+)(out) + NAD(+). NQR complex catalyzes the reduction of ubiquinone-1 to ubiquinol by two successive reactions, coupled with the transport of Na(+) ions from the cytoplasm to the periplasm. NqrA to NqrE are probably involved in the second step, the conversion of ubisemiquinone to ubiquinol. In Aliivibrio salmonicida (strain LFI1238) (Vibrio salmonicida (strain LFI1238)), this protein is Na(+)-translocating NADH-quinone reductase subunit E.